Consider the following 144-residue polypeptide: Maximins 7/H6 (144 aa).

The first 18 residues, 1-18 (MNFKYIVAVSFLIASAYA), serve as a signal peptide directing secretion. A propeptide spanning residues 19–43 (RSEENDEQSLSQRDILEEESLREIR) is cleaved from the precursor. Asn70 is subject to Asparagine amide. Positions 74-123 (TAEDHEVMKRLEAVMRDLDSLDYPEEAAERETRGFNQEEIANLFTKKEKR) are excised as a propeptide. At Leu143 the chain carries Leucine amide.

Belongs to the bombinin family. As to expression, expressed by the skin glands.

The protein resides in the secreted. Its function is as follows. Maximin-7 shows antimicrobial activity against bacteria and against the fungus C.albicans. It has little hemolytic activity. Functionally, maximin-H6 shows antimicrobial activity against bacteria and against the fungus C.albicans. Shows strong hemolytic activity. The polypeptide is Maximins 7/H6 (Bombina maxima (Giant fire-bellied toad)).